Reading from the N-terminus, the 361-residue chain is Inactive 2'-5'-oligoadenylate synthase 1D (361 aa).

It belongs to the 2-5A synthase family. Interacts with OAS1A, the interaction inhibits OAS1A catalytic activity. As to expression, expressed specifically in oocytes (at protein level). Expressed at highest level in ovary with lesser amounts in intestine, brain, thymus lung, kidney, liver and uterus.

Its subcellular location is the cytoplasm. Does not have 2'-5'-oligoadenylate synthetase activity, but can bind double-stranded RNA. May play a role in the control of female fertility, possibly by binding to and inhibiting OAS1A. This is Inactive 2'-5'-oligoadenylate synthase 1D from Mus musculus (Mouse).